The following is a 297-amino-acid chain: UDP-3-O-acyl-N-acetylglucosamine deacetylase (297 aa).

Positions 77, 236, and 240 each coordinate Zn(2+). His263 (proton donor) is an active-site residue.

Belongs to the LpxC family. Zn(2+) is required as a cofactor.

It catalyses the reaction a UDP-3-O-[(3R)-3-hydroxyacyl]-N-acetyl-alpha-D-glucosamine + H2O = a UDP-3-O-[(3R)-3-hydroxyacyl]-alpha-D-glucosamine + acetate. The protein operates within glycolipid biosynthesis; lipid IV(A) biosynthesis; lipid IV(A) from (3R)-3-hydroxytetradecanoyl-[acyl-carrier-protein] and UDP-N-acetyl-alpha-D-glucosamine: step 2/6. Functionally, catalyzes the hydrolysis of UDP-3-O-myristoyl-N-acetylglucosamine to form UDP-3-O-myristoylglucosamine and acetate, the committed step in lipid A biosynthesis. In Psychrobacter sp. (strain PRwf-1), this protein is UDP-3-O-acyl-N-acetylglucosamine deacetylase.